The chain runs to 257 residues: AT-hook motif nuclear-localized protein 16 (257 aa).

Residues 1–71 are disordered; sequence MAGGTALTPT…SKNKPKPPII (71 aa). Positions 53 to 65 form a DNA-binding region, a.T hook; the sequence is KRPRGRPAGSKNK. The PPC domain occupies 77–214; the sequence is PNSLRANAVE…DEAASMQNQQ (138 aa).

Interacts with FVE/MSI4 and MSI5 which are components of HDAC corepressor complexes. In terms of tissue distribution, preferentially expressed in the inflorescence meristem and young floral buds, as well as in seedling-stage vegetative meristems. Widely expressed in flowers, roots and stems, with relatively low expression in leaves.

Its subcellular location is the nucleus. In terms of biological role, transcription factor that specifically binds AT-rich DNA sequences related to the nuclear matrix attachment regions (MARs). Encodes a nuclear matrix protein that acts in the maintenance of genomic integrity by silencing TEs and repeat-containing genes through epigenetic machinery. Acts as a chromatin remodeling factor that modifies the architecture of FLC and FWA chromatin by modulating both H3 acetylation and methylation leading to the regulation of FLC and FWA expression. Negatively regulates floral repressors including MAF4 and MAF5. Plays a transcription activation role in anther development. Regulates the expression of arabinogalactan proteins (AGPs) involved in the formation of the nexine layer of the pollen wall. Binds AGP6, AGP11, AGP23 and AGP40 promoters. This chain is AT-hook motif nuclear-localized protein 16, found in Arabidopsis thaliana (Mouse-ear cress).